The sequence spans 72 residues: Translation initiation factor IF-1 (72 aa).

Residues 1–72 (MSDKSIKMQA…SNGRITYRHK (72 aa)) form the S1-like domain.

Belongs to the IF-1 family. As to quaternary structure, component of the 30S ribosomal translation pre-initiation complex which assembles on the 30S ribosome in the order IF-2 and IF-3, IF-1 and N-formylmethionyl-tRNA(fMet); mRNA recruitment can occur at any time during PIC assembly.

Its subcellular location is the cytoplasm. Its function is as follows. One of the essential components for the initiation of protein synthesis. Stabilizes the binding of IF-2 and IF-3 on the 30S subunit to which N-formylmethionyl-tRNA(fMet) subsequently binds. Helps modulate mRNA selection, yielding the 30S pre-initiation complex (PIC). Upon addition of the 50S ribosomal subunit IF-1, IF-2 and IF-3 are released leaving the mature 70S translation initiation complex. The polypeptide is Translation initiation factor IF-1 (Mycoplasmopsis pulmonis (strain UAB CTIP) (Mycoplasma pulmonis)).